A 508-amino-acid polypeptide reads, in one-letter code: Photosystem II CP47 reaction center protein (508 aa).

6 consecutive transmembrane segments (helical) span residues 21–36 (AVHI…WAGS), 101–115 (IVFS…IWHW), 140–156 (GIHL…FGAF), 203–218 (IAAG…FHLS), 237–252 (VLSS…AFVV), and 457–472 (SFAL…HGAR).

Belongs to the PsbB/PsbC family. PsbB subfamily. PSII is composed of 1 copy each of membrane proteins PsbA, PsbB, PsbC, PsbD, PsbE, PsbF, PsbH, PsbI, PsbJ, PsbK, PsbL, PsbM, PsbT, PsbX, PsbY, PsbZ, Psb30/Ycf12, at least 3 peripheral proteins of the oxygen-evolving complex and a large number of cofactors. It forms dimeric complexes. Binds multiple chlorophylls. PSII binds additional chlorophylls, carotenoids and specific lipids. is required as a cofactor.

The protein localises to the plastid. It localises to the chloroplast thylakoid membrane. One of the components of the core complex of photosystem II (PSII). It binds chlorophyll and helps catalyze the primary light-induced photochemical processes of PSII. PSII is a light-driven water:plastoquinone oxidoreductase, using light energy to abstract electrons from H(2)O, generating O(2) and a proton gradient subsequently used for ATP formation. In Trachelium caeruleum (Blue throatwort), this protein is Photosystem II CP47 reaction center protein.